The sequence spans 774 residues: Polymerase basic protein 2 (774 aa).

This sequence belongs to the influenza viruses PB2 family. Influenza RNA polymerase is composed of three subunits: PB1, PB2 and PA. Interacts (via N-terminus) with PB1 (via C-terminus). Interacts with nucleoprotein NP (via N-terminus). Interacts with host ANP32A (via C-terminus); this interaction promotes viral RNA synthesis.

The protein resides in the virion. Its subcellular location is the host nucleus. Functionally, plays an essential role in transcription initiation and cap-stealing mechanism, in which cellular capped pre-mRNAs are used to generate primers for viral transcription. Recognizes and binds a wide range of cap structures of target pre-RNAs which are subsequently cleaved after 10-13 nucleotides by the viral protein PA. Plays a role in the initiation of the viral genome replication and modulates the activity of the ribonucleoprotein (RNP) complex. This Influenza C virus (strain C/Johannesburg/1/1966) protein is Polymerase basic protein 2.